The sequence spans 92 residues: Cell division protein FtsB (92 aa).

Residues 1–3 lie on the Cytoplasmic side of the membrane; sequence MRL. The chain crosses the membrane as a helical span at residues 4–21; sequence FVFFMLCLLVLLQYHLWF. At 22–92 the chain is on the periplasmic side; it reads GKNGLGDRHN…TFFRIVPKED (71 aa). The stretch at 28–62 forms a coiled coil; it reads DRHNLQEEVTLILENNSELRQRNQMMFSEIKDLKE.

It belongs to the FtsB family. Part of a complex composed of FtsB, FtsL and FtsQ.

Its subcellular location is the cell inner membrane. Its function is as follows. Essential cell division protein. May link together the upstream cell division proteins, which are predominantly cytoplasmic, with the downstream cell division proteins, which are predominantly periplasmic. The protein is Cell division protein FtsB of Psychromonas ingrahamii (strain DSM 17664 / CCUG 51855 / 37).